We begin with the raw amino-acid sequence, 283 residues long: Bifunctional protein FolD (283 aa).

NADP(+)-binding positions include 165–167 (GRS), serine 190, and isoleucine 231.

This sequence belongs to the tetrahydrofolate dehydrogenase/cyclohydrolase family. Homodimer.

It carries out the reaction (6R)-5,10-methylene-5,6,7,8-tetrahydrofolate + NADP(+) = (6R)-5,10-methenyltetrahydrofolate + NADPH. The catalysed reaction is (6R)-5,10-methenyltetrahydrofolate + H2O = (6R)-10-formyltetrahydrofolate + H(+). It participates in one-carbon metabolism; tetrahydrofolate interconversion. Functionally, catalyzes the oxidation of 5,10-methylenetetrahydrofolate to 5,10-methenyltetrahydrofolate and then the hydrolysis of 5,10-methenyltetrahydrofolate to 10-formyltetrahydrofolate. The sequence is that of Bifunctional protein FolD from Herminiimonas arsenicoxydans.